Here is a 633-residue protein sequence, read N- to C-terminus: Dynein axonemal assembly factor 1 (633 aa).

Residues 1 to 80 (MHPEASEPPV…SRDDRDDRGP (80 aa)) form a disordered region. Positions 22–42 (AGDHGDAGPGVRKEEINETKE) are enriched in basic and acidic residues. A compositionally biased stretch (low complexity) spans 46–60 (GPCTTSCQSQQQPSG). The span at 70–80 (HSRDDRDDRGP) shows a compositional bias: basic and acidic residues. LRR repeat units lie at residues 101–123 (ALNDTLYLHFKGFDRIENLEEYT), 124–145 (GLRCLWLECNGIQRIENLQAQS), 146–167 (ELRCLFLQVNLLHKIENLEPLQ), 168–189 (KLDALNLSNNYIKTIENLSCLP), 190–211 (VLNTLQMAHNRLETVADIEHLR), and 215–236 (QLCVLDLSHNSLSDPEILSVLE). The region spanning 249 to 288 (NPVTKHIPNYRRTVTVRLKHLTYLDDRPVFPKDRACAEAW) is the LRRCT domain. The segment covering 326-344 (EERKKARDRGETPLPESEK) has biased composition (basic and acidic residues). 2 disordered regions span residues 326-364 (EERKKARDRGETPLPESEKSIPTSPEAQEKPPKGETQQK) and 404-436 (LSGNLAHTQTPVVVTPEEVTSPVEATDGARTED). At Ser-349 the chain carries Phosphoserine. Residues 352 to 364 (AQEKPPKGETQQK) are compositionally biased toward basic and acidic residues. Residues 413 to 427 (TPVVVTPEEVTSPVE) show a composition bias toward low complexity. Thr-462 bears the Phosphothreonine mark. Phosphoserine occurs at positions 465 and 488. Polar residues-rich tracts occupy residues 538-555 (TTDLETQSQDPSTASSHP) and 568-592 (GESNQPLPPQSCASDPTLAQSSEGG). Residues 538–633 (TTDLETQSQD…GLEDIEFGLD (96 aa)) are disordered.

Belongs to the DNAAF1 family.

The protein resides in the cell projection. The protein localises to the cilium. Functionally, cilium-specific protein required for the stability of the ciliary architecture. Plays a role in cytoplasmic preassembly of dynein arms. Involved in regulation of microtubule-based cilia and actin-based brush border microvilli. This is Dynein axonemal assembly factor 1 (Dnaaf1) from Rattus norvegicus (Rat).